We begin with the raw amino-acid sequence, 133 residues long: Large ribosomal subunit protein bL12 (133 aa).

It belongs to the bacterial ribosomal protein bL12 family. As to quaternary structure, homodimer. Part of the ribosomal stalk of the 50S ribosomal subunit. Forms a multimeric L10(L12)X complex, where L10 forms an elongated spine to which 2 to 4 L12 dimers bind in a sequential fashion. Binds GTP-bound translation factors.

Its function is as follows. Forms part of the ribosomal stalk which helps the ribosome interact with GTP-bound translation factors. Is thus essential for accurate translation. This chain is Large ribosomal subunit protein bL12, found in Trichodesmium erythraeum (strain IMS101).